We begin with the raw amino-acid sequence, 156 residues long: Keratin-associated protein 13-4 (156 aa).

A run of 4 repeats spans residues 37–46, 47–56, 57–66, and 73–82. Residues 37–82 form a 4 X 10 AA approximate repeats region; that stretch reads CQLGSSLYRNCQKTCWEPTSCRKSCYRRRTSMLCSPCQTTCSRSLG.

The protein belongs to the PMG family. As to quaternary structure, interacts with hair keratins.

Functionally, in the hair cortex, hair keratin intermediate filaments are embedded in an interfilamentous matrix, consisting of hair keratin-associated proteins (KRTAP), which are essential for the formation of a rigid and resistant hair shaft through their extensive disulfide bond cross-linking with abundant cysteine residues of hair keratins. The matrix proteins include the high-sulfur and high-glycine-tyrosine keratins. This Macaca fascicularis (Crab-eating macaque) protein is Keratin-associated protein 13-4 (KRTAP13-4).